The primary structure comprises 398 residues: 8-amino-7-oxononanoate synthase (398 aa).

Substrate is bound at residue Arg-23. Residue 110 to 111 (GY) coordinates pyridoxal 5'-phosphate. His-135 is a binding site for substrate. Residues Ser-181, His-209, and Thr-237 each coordinate pyridoxal 5'-phosphate. Residue Lys-240 is modified to N6-(pyridoxal phosphate)lysine. Thr-354 provides a ligand contact to substrate.

The protein belongs to the class-II pyridoxal-phosphate-dependent aminotransferase family. BioF subfamily. As to quaternary structure, homodimer. It depends on pyridoxal 5'-phosphate as a cofactor.

It catalyses the reaction 6-carboxyhexanoyl-[ACP] + L-alanine + H(+) = (8S)-8-amino-7-oxononanoate + holo-[ACP] + CO2. It functions in the pathway cofactor biosynthesis; biotin biosynthesis. Its function is as follows. Catalyzes the decarboxylative condensation of pimeloyl-[acyl-carrier protein] and L-alanine to produce 8-amino-7-oxononanoate (AON), [acyl-carrier protein], and carbon dioxide. The polypeptide is 8-amino-7-oxononanoate synthase (Anaeromyxobacter dehalogenans (strain 2CP-1 / ATCC BAA-258)).